A 610-amino-acid chain; its full sequence is Probable indole-3-acetic acid-amido synthetase GH3.1 (610 aa).

It belongs to the IAA-amido conjugating enzyme family. As to expression, expressed in flowers.

In terms of biological role, may catalyze the synthesis of indole-3-acetic acid (IAA)-amino acid conjugates, providing a mechanism for the plant to cope with the presence of excess auxin. The polypeptide is Probable indole-3-acetic acid-amido synthetase GH3.1 (GH3.1) (Oryza sativa subsp. japonica (Rice)).